We begin with the raw amino-acid sequence, 555 residues long: MTRHDSTRVIRAATGTTLTAKSWLTEAPLRMLMNNLDPDVAERPQELVVYGGIGRAARDWESFDAIVAALTRLDDDQTLLVQSGKPVGVFRTHADAPRVLIANSNLVPRWATWDHFNELDKKGLAMYGQMTAGSWIYIGAQGIVQGTYETFVEMGRQHYGGSLAGKWLFTGGLGGMGGAQPLAAVMAGASCLAVECRRSSIDMRLRTGYLDTWTDSLDEALRLIEESCTAKRPLSVGLLGNVADVLDELLLRGIKPDLLTDQTSAHDPVNGYLPQGWSVEEWDAKRVSAPKDVEAAAREAMANHIRAMLTFHALGVPTVDYGNNLRQMALEEGIDNAFDFPGFVPAYIRPLFCRGIGPFRWVALSGDPEDIAKTDAKVKELIPDDAHLHRWLDMAAEKIAFQGLPARICWVGLGDRHRLGLAFNAMVRSGELKAPVVIGRDHLDSGSVASPNRETEAMADGSDAVSDWPLLNALLNTASGATWVSLHHGGGVGMGFSQHAGMVIVCDGSEAADKRIERVLWNDPATGVMRHADAGYAIAVECAKDQGLDLPGILS.

Residues Gly51–Gly52, Gln129, Gly175–Gly177, Glu195, Gln262–His266, Tyr272–Leu273, and Tyr321 contribute to the NAD(+) site. The active site involves Cys409. Gly491 provides a ligand contact to NAD(+).

This sequence belongs to the urocanase family. The cofactor is NAD(+).

The protein localises to the cytoplasm. It carries out the reaction 4-imidazolone-5-propanoate = trans-urocanate + H2O. Its pathway is amino-acid degradation; L-histidine degradation into L-glutamate; N-formimidoyl-L-glutamate from L-histidine: step 2/3. In terms of biological role, catalyzes the conversion of urocanate to 4-imidazolone-5-propionate. The polypeptide is Urocanate hydratase (Xanthomonas campestris pv. campestris (strain ATCC 33913 / DSM 3586 / NCPPB 528 / LMG 568 / P 25)).